We begin with the raw amino-acid sequence, 690 residues long: Probable xyloglucan glycosyltransferase 1 (690 aa).

2 consecutive transmembrane segments (helical) span residues 120-140 (AFLL…AQGW) and 166-186 (LEYL…LFLI). Residue aspartate 272 is part of the active site. Substrate is bound by residues aspartate 331 and aspartate 333. Residue aspartate 425 is part of the active site. The next 2 membrane-spanning stretches (helical) occupy residues 503 to 523 (LILP…TMFV) and 528 to 548 (LPAW…ILPA). Positions 607-637 (QPKQQRVGSAPNLDSLAKESHPKKDSKKKKH) are disordered. A run of 2 helical transmembrane segments spans residues 640 to 659 (IYQK…ARSL) and 665 to 685 (IHFY…LDLI).

It belongs to the glycosyltransferase 2 family. Plant cellulose synthase-like C subfamily.

The protein resides in the golgi apparatus membrane. Functionally, probable beta-1,4-glucan synthase rather involved in the synthesis of the xyloglucan backbone than cellulose. Seems to work simultaneously with xyloglucan 6-xylosyltransferase. Xyloglucan is a noncellulosic polysaccharides of plant cell wall and consists of a glucan backbone substituted by xylose, galactose and fucose. The protein is Probable xyloglucan glycosyltransferase 1 (CSLC1) of Oryza sativa subsp. japonica (Rice).